Here is a 492-residue protein sequence, read N- to C-terminus: Catalase isozyme A (492 aa).

Residues 1–23 are disordered; it reads MDPCKFRPSSSFDTKTTTTNAGA. Residues 8-21 are compositionally biased toward polar residues; the sequence is PSSSFDTKTTTTNA. Catalysis depends on residues histidine 65 and asparagine 138. Tyrosine 348 lines the heme pocket.

The protein belongs to the catalase family. As to quaternary structure, homotetramer. Requires heme as cofactor.

The protein localises to the peroxisome. The protein resides in the glyoxysome. The catalysed reaction is 2 H2O2 = O2 + 2 H2O. Its function is as follows. Occurs in almost all aerobically respiring organisms and serves to protect cells from the toxic effects of hydrogen peroxide. The polypeptide is Catalase isozyme A (Oryza sativa subsp. indica (Rice)).